The primary structure comprises 383 residues: 8-amino-7-oxononanoate synthase (383 aa).

A substrate-binding site is contributed by R23. 110–111 serves as a coordination point for pyridoxal 5'-phosphate; sequence GF. H135 contacts substrate. Pyridoxal 5'-phosphate-binding residues include S181, H209, and T235. N6-(pyridoxal phosphate)lysine is present on K238. T351 contributes to the substrate binding site.

The protein belongs to the class-II pyridoxal-phosphate-dependent aminotransferase family. BioF subfamily. As to quaternary structure, homodimer. Requires pyridoxal 5'-phosphate as cofactor.

It catalyses the reaction 6-carboxyhexanoyl-[ACP] + L-alanine + H(+) = (8S)-8-amino-7-oxononanoate + holo-[ACP] + CO2. The protein operates within cofactor biosynthesis; biotin biosynthesis. Functionally, catalyzes the decarboxylative condensation of pimeloyl-[acyl-carrier protein] and L-alanine to produce 8-amino-7-oxononanoate (AON), [acyl-carrier protein], and carbon dioxide. The polypeptide is 8-amino-7-oxononanoate synthase (Aliivibrio fischeri (strain ATCC 700601 / ES114) (Vibrio fischeri)).